Here is an 84-residue protein sequence, read N- to C-terminus: MGKIILFEDVEFGGKKLELETSVSDLNVHGFNDIVSSIIVESGTWFVFDDEGFSGPSYKLTPGKYPNPGSWGGNDDELSSVKQQ.

2 consecutive Beta/gamma crystallin 'Greek key' domains span residues 2–42 and 43–84; these read GKII…IVES and GTWF…VKQQ. Positions 64–84 are disordered; sequence KYPNPGSWGGNDDELSSVKQQ.

It belongs to the beta/gamma-crystallin family. Monomer. Palps of larvae and otolith of the light-sensing ocellus.

Functionally, structural component of the neuroectodermal visual system. The chain is Beta/gamma-crystallin from Ciona intestinalis (Transparent sea squirt).